Reading from the N-terminus, the 360-residue chain is Chorismate synthase (360 aa).

NADP(+) is bound by residues Arg-48 and Arg-54. Residues 125 to 127, 246 to 247, Gly-286, 301 to 305, and Arg-327 contribute to the FMN site; these read RSS, NA, and KPTSS.

This sequence belongs to the chorismate synthase family. As to quaternary structure, homotetramer. Requires FMNH2 as cofactor.

It carries out the reaction 5-O-(1-carboxyvinyl)-3-phosphoshikimate = chorismate + phosphate. It participates in metabolic intermediate biosynthesis; chorismate biosynthesis; chorismate from D-erythrose 4-phosphate and phosphoenolpyruvate: step 7/7. In terms of biological role, catalyzes the anti-1,4-elimination of the C-3 phosphate and the C-6 proR hydrogen from 5-enolpyruvylshikimate-3-phosphate (EPSP) to yield chorismate, which is the branch point compound that serves as the starting substrate for the three terminal pathways of aromatic amino acid biosynthesis. This reaction introduces a second double bond into the aromatic ring system. This Actinobacillus pleuropneumoniae serotype 5b (strain L20) protein is Chorismate synthase.